Reading from the N-terminus, the 301-residue chain is Fluoroquinolones export ATP-binding protein Rv2688c (301 aa).

One can recognise an ABC transporter domain in the interval 18 to 246 (IRVRGLTFRY…RSRRRVRVEY (229 aa)). 52–59 (GPSGAGKS) serves as a coordination point for ATP.

This sequence belongs to the ABC transporter superfamily. As to quaternary structure, the complex is composed of 2 ATP-binding proteins (Rv2688c) and 2 transmembrane proteins (Rv2686c and Rv2687c).

It is found in the cell membrane. Its activity is regulated as follows. Inhibited by reserpine and verapamil. Part of the ABC transporter complex Rv2686c/Rv2687c/Rv2688c involved in fluoroquinolones export. Confers resistance to ciprofloxacin and, to a lesser extent, norfloxacin, moxifloxacin and sparfloxacin. Probably responsible for energy coupling to the transport system. The sequence is that of Fluoroquinolones export ATP-binding protein Rv2688c from Mycobacterium tuberculosis (strain ATCC 25618 / H37Rv).